Consider the following 104-residue polypeptide: DNA-directed RNA polymerase subunit omega (104 aa).

A disordered region spans residues 53-104 (EIESGNVTIHPDPEGKREAVRRRIEEEKRRKEEEEKKIKEQIAKEKEDGEKI). The segment covering 63 to 104 (PDPEGKREAVRRRIEEEKRRKEEEEKKIKEQIAKEKEDGEKI) has biased composition (basic and acidic residues).

Belongs to the RNA polymerase subunit omega family. The RNAP catalytic core consists of 2 alpha, 1 beta, 1 beta' and 1 omega subunit. When a sigma factor is associated with the core the holoenzyme is formed, which can initiate transcription.

It catalyses the reaction RNA(n) + a ribonucleoside 5'-triphosphate = RNA(n+1) + diphosphate. Functionally, promotes RNA polymerase assembly. Latches the N- and C-terminal regions of the beta' subunit thereby facilitating its interaction with the beta and alpha subunits. This Streptococcus pneumoniae serotype 2 (strain D39 / NCTC 7466) protein is DNA-directed RNA polymerase subunit omega.